The chain runs to 113 residues: Protein S100-A9 (113 aa).

Ala2 is subject to N-acetylalanine. EF-hand domains follow at residues 13-48 (ISTIINVFHQYSRKYGHPDTLNKAEFKEMVNKDLPN) and 55-90 (RNENLLRDIMEDLDTNQDNQLSFEECMMLMGKLIFA). His21 is a Zn(2+) binding site. 2 residues coordinate Ca(2+): Ser24 and His29. Residue Asp31 coordinates Zn(2+). Ca(2+) is bound by residues Thr32, Glu37, Asp68, Asn70, Asp72, Gln74, and Glu79. The Zn(2+) site is built by His92 and His96. A Pros-methylhistidine modification is found at His107.

In terms of assembly, homodimer. Preferentially exists as a heterodimer or heterotetramer with S100A8 known as calprotectin (S100A8/A9). S100A9 interacts with ATP2A2. S100A9 interacts with AGER, and with the heterodimeric complex formed by TLR4 and LY96 in the presence of calcium and/or zinc ions. S100A9 binds quinoline-3-carboxamides in the presence of calcium and/or zinc ions. S100A9 interacts with amyloid-beta protein 40. Calprotectin (S100A8/9) interacts with CEACAM3 and tubulin filaments in a calcium-dependent manner. Heterotetrameric calprotectin (S100A8/A9) interacts with ANXA6 and associates with tubulin filaments in activated monocytes. Calprotectin (S100A8/9) interacts with NCF2/P67PHOX, RAC1, RAC2, CYBA and CYBB. Calprotectin (S100A8/9) interacts with NOS2 to form the iNOS-S100A8/A9 transnitrosylase complex; induced by LDL(ox). Calprotectin (S100A8/9) interacts with CD69. In terms of processing, phosphorylated. Phosphorylation inhibits activation of tubulin polymerization. Post-translationally, methylation at His-107 by METTL9 reduces zinc-binding without affecting heterodimerization with S100A8. In terms of tissue distribution, highly expressed at sites of inflammation.

The protein localises to the secreted. The protein resides in the cytoplasm. It is found in the cytoskeleton. It localises to the cell membrane. S100A9 is a calcium- and zinc-binding protein which plays a prominent role in the regulation of inflammatory processes and immune response. It can induce neutrophil chemotaxis, adhesion, can increase the bactericidal activity of neutrophils by promoting phagocytosis via activation of SYK, PI3K/AKT, and ERK1/2 and can induce degranulation of neutrophils by a MAPK-dependent mechanism. Predominantly found as calprotectin (S100A8/A9) which has a wide plethora of intra- and extracellular functions. The intracellular functions include: facilitating leukocyte arachidonic acid trafficking and metabolism, modulation of the tubulin-dependent cytoskeleton during migration of phagocytes and activation of the neutrophilic NADPH-oxidase. Also participates in regulatory T-cell differentiation together with CD69. Activates NADPH-oxidase by facilitating the enzyme complex assembly at the cell membrane, transferring arachidonic acid, an essential cofactor, to the enzyme complex and S100A8 contributes to the enzyme assembly by directly binding to NCF2/P67PHOX. The extracellular functions involve pro-inflammatory, antimicrobial, oxidant-scavenging and apoptosis-inducing activities. Its pro-inflammatory activity includes recruitment of leukocytes, promotion of cytokine and chemokine production, and regulation of leukocyte adhesion and migration. Acts as an alarmin or a danger associated molecular pattern (DAMP) molecule and stimulates innate immune cells via binding to pattern recognition receptors such as Toll-like receptor 4 (TLR4) and receptor for advanced glycation endproducts (AGER). Binding to TLR4 and AGER activates the MAP-kinase and NF-kappa-B signaling pathways resulting in the amplification of the pro-inflammatory cascade. Has antimicrobial activity towards bacteria and fungi and exerts its antimicrobial activity probably via chelation of Zn(2+) which is essential for microbial growth. Can induce cell death via autophagy and apoptosis and this occurs through the cross-talk of mitochondria and lysosomes via reactive oxygen species (ROS) and the process involves BNIP3. Can regulate neutrophil number and apoptosis by an anti-apoptotic effect; regulates cell survival via ITGAM/ITGB and TLR4 and a signaling mechanism involving MEK-ERK. Its role as an oxidant scavenger has a protective role in preventing exaggerated tissue damage by scavenging oxidants. The iNOS-S100A8/A9 transnitrosylase complex is proposed to direct selective inflammatory stimulus-dependent S-nitrosylation of multiple targets such as GAPDH, NXA5, EZR, MSN and VIM by recognizing a [IL]-x-C-x-x-[DE] motif. This is Protein S100-A9 (S100a9) from Rattus norvegicus (Rat).